We begin with the raw amino-acid sequence, 269 residues long: Regulatory protein RecX (269 aa).

This sequence belongs to the RecX family.

Its subcellular location is the cytoplasm. Functionally, modulates RecA activity. In Listeria monocytogenes serotype 4b (strain CLIP80459), this protein is Regulatory protein RecX.